A 106-amino-acid chain; its full sequence is Large ribosomal subunit protein uL24 (106 aa).

The protein belongs to the universal ribosomal protein uL24 family. As to quaternary structure, part of the 50S ribosomal subunit.

One of two assembly initiator proteins, it binds directly to the 5'-end of the 23S rRNA, where it nucleates assembly of the 50S subunit. Its function is as follows. One of the proteins that surrounds the polypeptide exit tunnel on the outside of the subunit. This chain is Large ribosomal subunit protein uL24, found in Laribacter hongkongensis (strain HLHK9).